A 57-amino-acid polypeptide reads, in one-letter code: Preprotein translocase subunit SecG (57 aa).

The Cytoplasmic portion of the chain corresponds to Met1 to Asp31. The helical transmembrane segment at Pro32 to Phe53 threads the bilayer. Over Gly54–Pro57 the chain is Extracellular.

The protein belongs to the SEC61-beta family. In terms of assembly, component of the protein translocase complex. Heterotrimer consisting of alpha (SecY), beta (SecG) and gamma (SecE) subunits. Can form oligomers of the heterotrimer.

It localises to the cell membrane. Functionally, involved in protein export. The function of the beta subunit is unknown, but it may be involved in stabilization of the trimeric complex. The chain is Preprotein translocase subunit SecG from Methanothrix thermoacetophila (strain DSM 6194 / JCM 14653 / NBRC 101360 / PT) (Methanosaeta thermophila).